The sequence spans 459 residues: Cysteine--tRNA ligase (459 aa).

Cys-28 lines the Zn(2+) pocket. The 'HIGH' region motif lies at 30 to 40 (VTIYDLCHIGH). Residues Cys-209, His-234, and Glu-238 each coordinate Zn(2+). The 'KMSKS' region motif lies at 266–270 (KMSKS). Lys-269 contributes to the ATP binding site.

The protein belongs to the class-I aminoacyl-tRNA synthetase family. In terms of assembly, monomer. Zn(2+) is required as a cofactor.

It localises to the cytoplasm. It catalyses the reaction tRNA(Cys) + L-cysteine + ATP = L-cysteinyl-tRNA(Cys) + AMP + diphosphate. In Shewanella pealeana (strain ATCC 700345 / ANG-SQ1), this protein is Cysteine--tRNA ligase.